A 234-amino-acid polypeptide reads, in one-letter code: HTH-type transcriptional regulator MT1864 (234 aa).

In terms of domain architecture, HTH tetR-type spans 15 to 75; that stretch reads EQIEAKIVEL…LLLVDAYSDL (61 aa). The segment at residues 38 to 57 is a DNA-binding region (H-T-H motif); sequence SLRAIARNLGMVSSAVYRYV.

Homodimer.

The protein localises to the cytoplasm. Its function is as follows. May participate in the regulatory network that controls the expression of MmpL lipid transporters. This chain is HTH-type transcriptional regulator MT1864, found in Mycobacterium tuberculosis (strain CDC 1551 / Oshkosh).